The primary structure comprises 283 residues: Digeranylgeranylglyceryl phosphate synthase (283 aa).

8 helical membrane-spanning segments follow: residues 21 to 41 (ITAS…EIDI), 45 to 65 (LLVF…NDIF), 97 to 117 (LILG…IAVI), 135 to 155 (IGNF…GVAG), 158 to 178 (VMPV…REIV), 204 to 224 (LYFA…PYIL), 226 to 246 (IFGI…IYAM), and 261 to 281 (VSKF…VGAI).

This sequence belongs to the UbiA prenyltransferase family. DGGGP synthase subfamily. The cofactor is Mg(2+).

The protein localises to the cell membrane. It catalyses the reaction sn-3-O-(geranylgeranyl)glycerol 1-phosphate + (2E,6E,10E)-geranylgeranyl diphosphate = 2,3-bis-O-(geranylgeranyl)-sn-glycerol 1-phosphate + diphosphate. Its pathway is membrane lipid metabolism; glycerophospholipid metabolism. Prenyltransferase that catalyzes the transfer of the geranylgeranyl moiety of geranylgeranyl diphosphate (GGPP) to the C2 hydroxyl of (S)-3-O-geranylgeranylglyceryl phosphate (GGGP). This reaction is the second ether-bond-formation step in the biosynthesis of archaeal membrane lipids. The chain is Digeranylgeranylglyceryl phosphate synthase from Methanocaldococcus jannaschii (strain ATCC 43067 / DSM 2661 / JAL-1 / JCM 10045 / NBRC 100440) (Methanococcus jannaschii).